A 461-amino-acid chain; its full sequence is Asparagine--tRNA ligase (461 aa).

This sequence belongs to the class-II aminoacyl-tRNA synthetase family. Homodimer.

The protein localises to the cytoplasm. The catalysed reaction is tRNA(Asn) + L-asparagine + ATP = L-asparaginyl-tRNA(Asn) + AMP + diphosphate + H(+). The polypeptide is Asparagine--tRNA ligase (Nitratidesulfovibrio vulgaris (strain DP4) (Desulfovibrio vulgaris)).